Reading from the N-terminus, the 450-residue chain is uncharacterized protein (450 aa).

The span at 141 to 151 shows a compositional bias: basic and acidic residues; sequence WLDKTDGEKNS. Disordered stretches follow at residues 141–171, 276–298, and 395–416; these read WLDK…DSAG, LQDS…AVSQ, and DDED…LSRN. Positions 152–171 are enriched in polar residues; it reads EASSTDNSLENSTKGADSAG. Residues 283 to 298 show a composition bias toward basic and acidic residues; the sequence is QGDKGEKESKDDAVSQ. Positions 395 to 411 are enriched in acidic residues; it reads DDEDEDNVDNSEGDEES.

This is an uncharacterized protein from Saccharomyces cerevisiae (strain ATCC 204508 / S288c) (Baker's yeast).